The following is a 316-amino-acid chain: tRNA-cytidine(32) 2-sulfurtransferase (316 aa).

The short motif at 45-50 (SGGKDS) is the PP-loop motif element. [4Fe-4S] cluster contacts are provided by C120, C123, and C211.

It belongs to the TtcA family. Homodimer. Mg(2+) serves as cofactor. It depends on [4Fe-4S] cluster as a cofactor.

It is found in the cytoplasm. It carries out the reaction cytidine(32) in tRNA + S-sulfanyl-L-cysteinyl-[cysteine desulfurase] + AH2 + ATP = 2-thiocytidine(32) in tRNA + L-cysteinyl-[cysteine desulfurase] + A + AMP + diphosphate + H(+). It functions in the pathway tRNA modification. In terms of biological role, catalyzes the ATP-dependent 2-thiolation of cytidine in position 32 of tRNA, to form 2-thiocytidine (s(2)C32). The sulfur atoms are provided by the cysteine/cysteine desulfurase (IscS) system. In Shewanella sediminis (strain HAW-EB3), this protein is tRNA-cytidine(32) 2-sulfurtransferase.